We begin with the raw amino-acid sequence, 1137 residues long: Bone sialoprotein-binding protein (1137 aa).

The signal sequence occupies residues 1 to 52 (MINRDNKKAITKKGMISNRLNKFSIRKYTVGTASILVGTTLIFGLGNQEAKA). The tract at residues 53–601 (AENTSTENAK…GDGTVKPEEK (549 aa)) is ligand binding A region. Disordered stretches follow at residues 54 to 249 (ENTS…TAPT) and 675 to 697 (LPTKENGTTDGEKDSNGSSVTVK). Residues 61–75 (AKQDEASASDNKEVV) are compositionally biased toward basic and acidic residues. The span at 77 to 89 (ETENNSTQKNDLT) shows a compositional bias: polar residues. Basic and acidic residues predominate over residues 92 to 106 (IKKETNTDSHQEAKE). Residues 109–126 (TTSSTQQQQNNATTSTET) are compositionally biased toward low complexity. Positions 130 to 145 (NIEKENVKPSTDKTAT) are enriched in basic and acidic residues. Over residues 158-207 (PNNTNNDVTTKPSTSEIQTTPTTPQESTNIENSQPQPTPSKVDNQVTDAT) the composition is skewed to polar residues. Positions 216-241 (SKEELKNNPEKLKELVRNDSNTDRST) are enriched in basic and acidic residues. 3 CNA-B domains span residues 602–714 (LYKI…YKEP), 715–824 (KYNL…YKTP), and 825–935 (KYSL…EEDT). Positions 896–1112 (TQTGTNTTED…TGSENNGSNN (217 aa)) are disordered. Acidic residues-rich tracts occupy residues 903–913 (TEDDKDADGGE) and 930–1076 (YFEE…DSDS). Positions 1100-1104 (LPETG) match the LPXTG sorting signal motif. Thr-1103 carries the post-translational modification Pentaglycyl murein peptidoglycan amidated threonine. Residues 1104–1137 (GSENNGSNNATLFGGLFAALGSLLLFGRRKKQNK) constitute a propeptide, removed by sortase.

It belongs to the serine-aspartate repeat-containing protein (SDr) family.

The protein resides in the secreted. It localises to the cell wall. Functionally, specifically interacts with bone sialoprotein (BSP), a glycoprotein of bone and dentin extracellular matrix. Could contribute to staphylococcal osteomyelitis and arthritis. This Staphylococcus aureus (strain MRSA252) protein is Bone sialoprotein-binding protein (bbp).